A 491-amino-acid polypeptide reads, in one-letter code: Argininosuccinate lyase (491 aa).

It belongs to the lyase 1 family. Argininosuccinate lyase subfamily.

The protein localises to the cytoplasm. It carries out the reaction 2-(N(omega)-L-arginino)succinate = fumarate + L-arginine. Its pathway is amino-acid biosynthesis; L-arginine biosynthesis; L-arginine from L-ornithine and carbamoyl phosphate: step 3/3. This chain is Argininosuccinate lyase, found in Methanosarcina barkeri (strain Fusaro / DSM 804).